Reading from the N-terminus, the 250-residue chain is 2,3-bisphosphoglycerate-dependent phosphoglycerate mutase (250 aa).

Residues 10-17 (RHGESQWN), 23-24 (TG), arginine 62, 89-92 (ERHY), lysine 100, 116-117 (RR), and 185-186 (GN) each bind substrate. The active-site Tele-phosphohistidine intermediate is the histidine 11. The active-site Proton donor/acceptor is glutamate 89.

It belongs to the phosphoglycerate mutase family. BPG-dependent PGAM subfamily. In terms of assembly, homodimer.

It carries out the reaction (2R)-2-phosphoglycerate = (2R)-3-phosphoglycerate. It functions in the pathway carbohydrate degradation; glycolysis; pyruvate from D-glyceraldehyde 3-phosphate: step 3/5. Its function is as follows. Catalyzes the interconversion of 2-phosphoglycerate and 3-phosphoglycerate. This Yersinia enterocolitica serotype O:8 / biotype 1B (strain NCTC 13174 / 8081) protein is 2,3-bisphosphoglycerate-dependent phosphoglycerate mutase.